The sequence spans 575 residues: Guanine nucleotide-binding protein-like 3-like protein (575 aa).

The segment covering 1-30 (MMKLRHKNKKPGKGSKGCKKPAKQNGKKAA) has biased composition (basic residues). A disordered region spans residues 1-75 (MMKLRHKNKK…AAREQERHRR (75 aa)). Residues 9 to 28 (KKPGKGSKGCKKPAKQNGKK) are required for nucleolar localization. Positions 42-72 (SNDHASREAELKKKRVGEMREKQQAAREQER) are enriched in basic and acidic residues. Residues 51-79 (ELKKKRVGEMREKQQAAREQERHRRRTIE) are a coiled coil. In terms of domain architecture, CP-type G spans 118–303 (YKEFHKVVEY…LLDAPGIVPG (186 aa)). Residues 166 to 169 (NKID), 252 to 259 (GLPNVGKS), and 296 to 299 (DAPG) each bind GTP. Lys-470 participates in a covalent cross-link: Glycyl lysine isopeptide (Lys-Gly) (interchain with G-Cter in SUMO1).

This sequence belongs to the TRAFAC class YlqF/YawG GTPase family. Interacts with MDM2; this interaction, which occurs in the nucleoplasm, stabilizes MDM2. Indirectly interacts with TP53, via MDM2-binding. Interacts with TERF1; this interaction probably occurs in the nucleoplasm and is increased during mitosis, when the nucleolus is disassembled. This binding may promote TERF1 homodimerization. Interacts with TERT.

The protein resides in the nucleus. The protein localises to the nucleolus. Its function is as follows. Stabilizes TERF1 telomeric association by preventing TERF1 recruitment by PML. Stabilizes TERF1 protein by preventing its ubiquitination and hence proteasomal degradation. Does so by interfering with TERF1-binding to FBXO4 E3 ubiquitin-protein ligase. Required for cell proliferation. By stabilizing TRF1 protein during mitosis, promotes metaphase-to-anaphase transition. Stabilizes MDM2 protein by preventing its ubiquitination, and hence proteasomal degradation. By acting on MDM2, may affect TP53 activity. Required for normal processing of ribosomal pre-rRNA. Binds GTP. This chain is Guanine nucleotide-binding protein-like 3-like protein (GNL3L), found in Bos taurus (Bovine).